A 134-amino-acid chain; its full sequence is Interleukin-5 (134 aa).

A signal peptide spans 1 to 19 (MRMLLHLSLLALGAAYVYA). O-linked (GalNAc...) threonine glycosylation is present at T22. An N-linked (GlcNAc...) asparagine glycan is attached at N47.

It belongs to the IL-5 family. Homodimer; disulfide-linked. Interacts with IL5RA. Interacts with CSF2RB. As to expression, present in peripheral blood mononuclear cells.

It is found in the secreted. In terms of biological role, homodimeric cytokine expressed predominantly by T-lymphocytes and NK cells that plays an important role in the survival, differentiation, and chemotaxis of eosinophils. Also acts on activated and resting B-cells to induce immunoglobulin production, growth, and differentiation. Mechanistically, exerts its biological effects through a receptor composed of IL5RA subunit and the cytokine receptor common subunit beta/CSF2RB. Binding to the receptor leads to activation of various kinases including LYN, SYK and JAK2 and thereby propagates signals through the RAS-MAPK and JAK-STAT5 pathways respectively. This is Interleukin-5 (IL5) from Homo sapiens (Human).